The sequence spans 329 residues: Ficolin-2 (329 aa).

The signal sequence occupies residues 1 to 29 (MELGGAAGALGPSGPLLVCLCFGTLAAQA). The Collagen-like domain occupies 52–111 (GCPGLPGAPGLKGETGAAGLKGERGLPGVPGKAGPAGPKGSTGAQGEKGARGEKGESGQL). Positions 64-113 (GETGAAGLKGERGLPGVPGKAGPAGPKGSTGAQGEKGARGEKGESGQLHS) are disordered. Residues 77-90 (LPGVPGKAGPAGPK) show a composition bias toward low complexity. The region spanning 112–329 (HSCATGPRTC…KVSEMKLRLT (218 aa)) is the Fibrinogen C-terminal domain. Intrachain disulfides connect C114-C142 and C121-C149. Residues D265, D267, S269, and S271 each coordinate Ca(2+). A disulfide bridge links C273 with C286. Residue N316 is glycosylated (N-linked (GlcNAc...) asparagine).

The protein belongs to the ficolin lectin family. Homotrimer. Interacts with elastin. Interacts with MASP1 and MASP2.

The protein resides in the secreted. Functionally, may function in innate immunity through activation of the lectin complement pathway. Calcium-dependent and GlcNAc-binding lectin. In Bos taurus (Bovine), this protein is Ficolin-2 (FCN2).